The primary structure comprises 225 residues: Helicostatins (225 aa).

Positions 1-18 are cleaved as a signal peptide; it reads MLYSSLPVCFLVLGAALC. The propeptide occupies 19–48; that stretch reads APERMQNEAEPHDLQPHEAEPHSDHVAPLA. Leucine amide occurs at positions 58, 79, and 90. The propeptide occupies 94-127; sequence SVDEDQSNDEQQLTTSDLDQAALAELFDQYDDAE. Leucine amide is present on Leu137. The propeptide occupies 141–149; sequence FADDETSEE. A leucine amide mark is found at Leu159, Leu170, Leu181, Leu192, and Leu206. A disordered region spans residues 205–225; sequence GLGKRSGDDVSADDSDNYFDV. Positions 210–225 are excised as a propeptide; the sequence is SGDDVSADDSDNYFDV. Over residues 214–225 the composition is skewed to acidic residues; sequence VSADDSDNYFDV.

The protein belongs to the allatostatin family. In terms of tissue distribution, highly expressed in the CNS and gut of larvae. Also expressed in the cells of the larval brain and ventral nerve cord and in endocrine cells of the midgut.

Its subcellular location is the secreted. May act as a neurotransmitter or neuromodulator. The protein is Helicostatins of Helicoverpa armigera (Cotton bollworm).